The following is a 322-amino-acid chain: Acetyl-coenzyme A carboxylase carboxyl transferase subunit alpha (322 aa).

Positions 39–293 constitute a CoA carboxyltransferase C-terminal domain; it reads RLQKKSQALT…RRALTDTLAE (255 aa).

It belongs to the AccA family. In terms of assembly, acetyl-CoA carboxylase is a heterohexamer composed of biotin carboxyl carrier protein (AccB), biotin carboxylase (AccC) and two subunits each of ACCase subunit alpha (AccA) and ACCase subunit beta (AccD).

It is found in the cytoplasm. The enzyme catalyses N(6)-carboxybiotinyl-L-lysyl-[protein] + acetyl-CoA = N(6)-biotinyl-L-lysyl-[protein] + malonyl-CoA. The protein operates within lipid metabolism; malonyl-CoA biosynthesis; malonyl-CoA from acetyl-CoA: step 1/1. Functionally, component of the acetyl coenzyme A carboxylase (ACC) complex. First, biotin carboxylase catalyzes the carboxylation of biotin on its carrier protein (BCCP) and then the CO(2) group is transferred by the carboxyltransferase to acetyl-CoA to form malonyl-CoA. The protein is Acetyl-coenzyme A carboxylase carboxyl transferase subunit alpha of Thiobacillus denitrificans (strain ATCC 25259 / T1).